A 227-amino-acid chain; its full sequence is H-2 class II histocompatibility antigen, A-U alpha chain (227 aa).

An alpha-1 region spans residues 1–82; the sequence is DHVGSYGIVV…KRSNSTPATN (82 aa). Residues 1-189 lie on the Extracellular side of the membrane; that stretch reads DHVGSYGIVV…IPAPMSELTE (189 aa). Residues 83–176 are alpha-2; that stretch reads EAPQATVFPK…GLEEPVLKHW (94 aa). The region spanning 85–177 is the Ig-like C1-type domain; that stretch reads PQATVFPKSP…LEEPVLKHWE (93 aa). Cysteine 105 and cysteine 161 are oxidised to a cystine. A glycan (N-linked (GlcNAc...) asparagine) is linked at asparagine 116. The interval 177 to 189 is connecting peptide; sequence EPEIPAPMSELTE. A helical membrane pass occupies residues 190 to 215; sequence TVVCALGLSVGLVGIVVGTIFIIQGL. Over 216 to 227 the chain is Cytoplasmic; sequence RSGGTSRHPGPL.

It belongs to the MHC class II family.

It localises to the membrane. In Mus musculus (Mouse), this protein is H-2 class II histocompatibility antigen, A-U alpha chain (H2-Aa).